Reading from the N-terminus, the 592-residue chain is A-type ATP synthase subunit A (592 aa).

236 to 243 is a binding site for ATP; that stretch reads GPFGSGKT.

Belongs to the ATPase alpha/beta chains family. In terms of assembly, has multiple subunits with at least A(3), B(3), C, D, E, F, H, I and proteolipid K(x).

Its subcellular location is the cell membrane. The catalysed reaction is ATP + H2O + 4 H(+)(in) = ADP + phosphate + 5 H(+)(out). Functionally, component of the A-type ATP synthase that produces ATP from ADP in the presence of a proton gradient across the membrane. The A chain is the catalytic subunit. In Methanopyrus kandleri (strain AV19 / DSM 6324 / JCM 9639 / NBRC 100938), this protein is A-type ATP synthase subunit A.